We begin with the raw amino-acid sequence, 220 residues long: Fibroblast growth factor 3 (220 aa).

Residues 1 to 19 form the signal peptide; the sequence is MLVIWLLLLALLPEPRVPA. The interval 19–40 is disordered; it reads AATASPRAPRDAGGRGGVYEHL. The N-linked (GlcNAc...) asparagine glycan is linked to Asn66.

Belongs to the heparin-binding growth factors family.

The protein localises to the secreted. In terms of biological role, plays an important role in the regulation of embryonic development, cell proliferation, and cell differentiation. This chain is Fibroblast growth factor 3 (FGF3), found in Gallus gallus (Chicken).